Consider the following 99-residue polypeptide: Beta-defensin 127 (99 aa).

The first 20 residues, 1-20 (MGLFMIIAILLFQKPTVTEQ), serve as a signal peptide directing secretion. Cystine bridges form between cysteine 24–cysteine 53, cysteine 33–cysteine 47, and cysteine 37–cysteine 54. Residues 66–99 (ITKPPRPKPATLALTLQDYVTIIENFPSLKTQST) constitute a propeptide that is removed on maturation.

This sequence belongs to the beta-defensin family.

It is found in the secreted. In terms of biological role, has antibacterial activity. The polypeptide is Beta-defensin 127 (DEFB127) (Homo sapiens (Human)).